Consider the following 274-residue polypeptide: Diaminopimelate epimerase (274 aa).

Substrate-binding residues include Asn-11, Gln-44, and Asn-64. Cys-73 functions as the Proton donor in the catalytic mechanism. Substrate is bound by residues 74–75 (GN), Asn-157, Asn-190, and 208–209 (ER). The Proton acceptor role is filled by Cys-217. 218–219 (GS) serves as a coordination point for substrate.

This sequence belongs to the diaminopimelate epimerase family. In terms of assembly, homodimer.

Its subcellular location is the cytoplasm. The catalysed reaction is (2S,6S)-2,6-diaminopimelate = meso-2,6-diaminopimelate. The protein operates within amino-acid biosynthesis; L-lysine biosynthesis via DAP pathway; DL-2,6-diaminopimelate from LL-2,6-diaminopimelate: step 1/1. In terms of biological role, catalyzes the stereoinversion of LL-2,6-diaminopimelate (L,L-DAP) to meso-diaminopimelate (meso-DAP), a precursor of L-lysine and an essential component of the bacterial peptidoglycan. The chain is Diaminopimelate epimerase from Yersinia pseudotuberculosis serotype O:1b (strain IP 31758).